The following is a 344-amino-acid chain: Trace amine-associated receptor 8c (344 aa).

At 1-31 the chain is on the extracellular side; the sequence is MTSNFSQPALQLCYENTNGSCIKTPYSPGPR. N-linked (GlcNAc...) asparagine glycosylation is found at Asn4 and Asn18. Cystine bridges form between Cys21-Cys185 and Cys104-Cys189. The chain crosses the membrane as a helical span at residues 32-52; it reads VILYMVYGFGAVLAVCGNLLV. Over 53–67 the chain is Cytoplasmic; that stretch reads VISVLHFKQLHSPAN. A helical membrane pass occupies residues 68 to 88; sequence FLIASLASADFLVGISVMPFS. Over 89–111 the chain is Extracellular; the sequence is MVRSIESCWYFGDAFCSLHSCCD. A helical transmembrane segment spans residues 112–132; sequence VAFCYSSALHLCFISVDRYIA. The Cytoplasmic segment spans residues 133–146; the sequence is VTDPLVYPTKFTVS. Residues 147–167 traverse the membrane as a helical segment; it reads VSGICISISWILPLVYSSAVF. Residues 168–195 are Extracellular-facing; that stretch reads YTGISAKGIESLVSALNCVGGCQVVVNQ. Residues 196 to 216 traverse the membrane as a helical segment; that stretch reads DWVLISFLLFFIPTVVMIILY. Topologically, residues 217-260 are cytoplasmic; sequence SKIFLVAKQQAVKIETSVSGNRGESSSESHKARVAKRERKAAKT. A helical transmembrane segment spans residues 261–281; sequence LGVTVVAFMVSWLPYTIDALV. Position 282 (Asp282) is a topological domain, extracellular. A helical transmembrane segment spans residues 283–303; the sequence is AFMGFITPAYVYEICCWSAYY. Topologically, residues 304 to 344 are cytoplasmic; it reads NSAMNPLIYAFFYPWFRKAIKLILSGKILKGHSSTTNLFSE.

This sequence belongs to the G-protein coupled receptor 1 family. In terms of tissue distribution, specifically expressed in neurons of the olfactory epithelium.

It is found in the cell membrane. Functionally, olfactory receptor specific for trace amines, such ascyclohexylamine (1-MPD). Trace amine compounds are enriched in animal body fluids and act on trace amine-associated receptors (TAARs) to elicit both intraspecific and interspecific innate behaviors. Ligand-binding causes a conformation change that triggers signaling via G(s)-class of G alpha proteins (GNAL or GNAS). The polypeptide is Trace amine-associated receptor 8c (Mus musculus (Mouse)).